Here is a 216-residue protein sequence, read N- to C-terminus: Nucleoside triphosphate pyrophosphatase (216 aa).

Asp-82 functions as the Proton acceptor in the catalytic mechanism.

This sequence belongs to the Maf family. The cofactor is a divalent metal cation.

Its subcellular location is the cytoplasm. The enzyme catalyses a ribonucleoside 5'-triphosphate + H2O = a ribonucleoside 5'-phosphate + diphosphate + H(+). It catalyses the reaction a 2'-deoxyribonucleoside 5'-triphosphate + H2O = a 2'-deoxyribonucleoside 5'-phosphate + diphosphate + H(+). Its function is as follows. Nucleoside triphosphate pyrophosphatase. May have a dual role in cell division arrest and in preventing the incorporation of modified nucleotides into cellular nucleic acids. The protein is Nucleoside triphosphate pyrophosphatase of Mycobacterium ulcerans (strain Agy99).